The chain runs to 421 residues: Acylglycerol kinase, mitochondrial (421 aa).

Lys6 bears the N6-acetyllysine mark. The tract at residues 15–31 is hydrophobic; sequence TTAGLCLLTWGGHWLYG. The 142-residue stretch at 58-199 folds into the DAGKc domain; the sequence is AQVKKATVFL…LDVLQIKGEK (142 aa). The disordered stretch occupies residues 252–271; that stretch reads ISYTGPRERPPIEPEETPPR.

This sequence belongs to the AGK family. Component of the TIM22 complex, which core is composed of TIMM22, associated with TIMM10 (TIMM10A and/or TIMM10B), TIMM9, AGK and TIMM29. Interacts with SMIM26. Mg(2+) serves as cofactor. As to expression, ubiquitously expressed.

It is found in the mitochondrion inner membrane. The protein localises to the mitochondrion intermembrane space. The catalysed reaction is a monoacylglycerol + ATP = a monoacyl-sn-glycero-3-phosphate + ADP + H(+). The enzyme catalyses a 1,2-diacyl-sn-glycerol + ATP = a 1,2-diacyl-sn-glycero-3-phosphate + ADP + H(+). It carries out the reaction an N-acylsphing-4-enine + ATP = an N-acylsphing-4-enine 1-phosphate + ADP + H(+). It catalyses the reaction 1,2-di-(9Z-octadecenoyl)-sn-glycerol + ATP = 1,2-di-(9Z-octadecenoyl)-sn-glycero-3-phosphate + ADP + H(+). The catalysed reaction is 1-(9Z-octadecenoyl)-sn-glycerol + ATP = 1-(9Z-octadecenoyl)-sn-glycero-3-phosphate + ADP + H(+). The enzyme catalyses 1-(5Z,8Z,11Z,14Z-eicosatetraenoyl)-sn-glycerol + ATP = 1-(5Z,8Z,11Z,14Z-eicosatetraenoyl)-sn-glycero-3-phosphate + ADP + H(+). It carries out the reaction a 1-acyl-sn-glycerol + ATP = a 1-acyl-sn-glycero-3-phosphate + ADP + H(+). It catalyses the reaction 1-hexadecanoyl-sn-glycerol + ATP = 1-hexadecanoyl-sn-glycero-3-phosphate + ADP + H(+). The catalysed reaction is a 2-acylglycerol + ATP = a 2-acyl-sn-glycerol 3-phosphate + ADP + H(+). The enzyme catalyses 2-(5Z,8Z,11Z,14Z-eicosatetraenoyl)-glycerol + ATP = 2-(5Z,8Z,11Z,14Z-eicosatetraenoyl)-sn-glycero-3-phosphate + ADP + H(+). It carries out the reaction N-(hexanoyl)sphing-4-enine + ATP = N-hexanoylsphing-4-enine 1-phosphate + ADP + H(+). It participates in lipid metabolism; glycerolipid metabolism. Both the ceramide and diacylglycerol kinase activities are inhibited by sphingosine and stimulated by cardiolipin. Both activities are stimulated by calcium when magnesium concentrations are low but inhibited by calcium when magnesium concentrations are high. Lipid kinase that can phosphorylate both monoacylglycerol and diacylglycerol to form lysophosphatidic acid (LPA) and phosphatidic acid (PA), respectively. Phosphorylates ceramide but not sphingosine. Phosphorylates 1,2-dioleoylglycerol more rapidly than 2,3-dioleoylglycerol. Independently of its lipid kinase activity, acts as a component of the TIM22 complex. The TIM22 complex mediates the import and insertion of multi-pass transmembrane proteins into the mitochondrial inner membrane by forming a twin-pore translocase that uses the membrane potential as the external driving force. In the TIM22 complex, required for the import of a subset of metabolite carriers into mitochondria, such as ANT1/SLC25A4 and SLC25A24, while it is not required for the import of TIMM23. Overexpression increases the formation and secretion of LPA, resulting in transactivation of EGFR and activation of the downstream MAPK signaling pathway, leading to increased cell growth. The sequence is that of Acylglycerol kinase, mitochondrial from Mus musculus (Mouse).